We begin with the raw amino-acid sequence, 354 residues long: Type II secretion system protein K (354 aa).

A propeptide spans 1 to 7 (MSRRQRG) (leader sequence). A helical membrane pass occupies residues 8–28 (VALLIVMLMLSLMVTIAASIT). Topologically, residues 29–354 (ERSGKAWQRT…QYGGYRTVNP (326 aa)) are periplasmic. A disordered region spans residues 114–151 (NVTPNNASGNNTSGNNNAANGSSGNGNSPQPPKVGTSE). Low complexity predominate over residues 118-141 (NNASGNNTSGNNNAANGSSGNGNS).

It belongs to the GSP K family. Type II secretion is composed of four main components: the outer membrane complex, the inner membrane complex, the cytoplasmic secretion ATPase and the periplasm-spanning pseudopilus. Interacts with core component OutG. In terms of processing, cleaved by prepilin peptidase.

Its subcellular location is the cell inner membrane. In terms of biological role, component of the type II secretion system required for the energy-dependent secretion of extracellular factors such as proteases and toxins from the periplasm. Plays a role in pseudopilus assembly and seems to control its length. Interacts with the pseudopilus tip complex that is critical for the recognition and binding of secretion substrates. This Dickeya chrysanthemi (Pectobacterium chrysanthemi) protein is Type II secretion system protein K (outK).